Here is a 58-residue protein sequence, read N- to C-terminus: Large ribosomal subunit protein bL32 (58 aa).

The span at 1-19 shows a compositional bias: basic residues; the sequence is MAVPKKRTSKSKKNMRKAN. A disordered region spans residues 1–58; the sequence is MAVPKKRTSKSKKNMRKANWKNQAKLAAKKALSLGKSVETQRSHSFVHPRYEEEEEED. The segment covering 20 to 32 has biased composition (low complexity); it reads WKNQAKLAAKKAL.

The protein belongs to the bacterial ribosomal protein bL32 family.

This chain is Large ribosomal subunit protein bL32, found in Trichodesmium erythraeum (strain IMS101).